A 449-amino-acid chain; its full sequence is Agmatine hydroxycinnamoyltransferase 1 (449 aa).

Active-site proton acceptor residues include His153 and Asp392.

The protein belongs to the plant acyltransferase family. As to expression, highly expressed in roots. Expressed at low levels in flowers.

Its function is as follows. Hydroxycinnamoyl transferase that catalyzes the transfer of an acyl from p-coumaryol-CoA to agmatine, to produce coumaroyl agmatine. Can use feruloyl-CoA, caffeoyl-CoA and sinapoyl-CoA as acyl donors. Seems to be able to transfer the acyl group from p-coumaroyl-CoA and feruloyl-CoA to the acyl acceptors putrescine and spermidine. The protein is Agmatine hydroxycinnamoyltransferase 1 of Oryza sativa subsp. japonica (Rice).